We begin with the raw amino-acid sequence, 163 residues long: Cyanate hydratase (163 aa).

Residues R103, E106, and S129 contribute to the active site.

Belongs to the cyanase family.

The enzyme catalyses cyanate + hydrogencarbonate + 3 H(+) = NH4(+) + 2 CO2. In terms of biological role, catalyzes the reaction of cyanate with bicarbonate to produce ammonia and carbon dioxide. The polypeptide is Cyanate hydratase (Paracoccidioides brasiliensis (strain Pb18)).